Reading from the N-terminus, the 589-residue chain is MFQEEIAKQLSVLTEIEANKILECIESTKNKDMADFAVPIPKLNKFKKLVGKPDQLAIDFASKIQLNDCIQGASATGNYLNFKVNRLLQVQEILKEVINQKEKYGMTEQGKGKKVIVEFSSPNIAKPFHAGHLRSTIIGNFMVNLFNELAYETVSMNYLGDWGKQYGLLAVGFEKYGSEEELLADPIKHLYNVYVQINGEAEKEEEAKKKYAEEIAAGVEPTAPLQTTPTIHDTARAYFKRMEDGDAEALAIWKRFRDLSIVKYKDIYNRLNVKFDIYAGESLVTEGMTIEFKKLQDKNLLEDSQGAKVIDLSKPNKLGKVLVQKTDGTTLYITRDIAAAVDRKNNIGFDKMYYVVASQQDFHFRQLFDILGKMDYQWQKDLTHINYGMVKGMSTRKGTVVFLEDILNKTQKKMLKIMKQNEQKFAEIEDPEKVADIVGLSAVVIQDFNAKRNKDYDFNWDRMLKSDGDTGPYLQYAHARLCSLERKSGFEFNPNANLSLLSEPEAFNLAITIGRYPEIIQLTHNQLEPSTLVGYLFELAHAVSSAHQVLWIKDREKDVAEARFVLYWAAKVILGSGLRILGLVPLERM.

L-arginine is bound by residues 121 to 123 (SPN), H132, Y332, D336, and Q360. The short motif at 121–132 (SPNIAKPFHAGH) is the 'HIGH' region element. Positions 469-483 (DTGPYLQYAHARLCS) are interaction with tRNA.

This sequence belongs to the class-I aminoacyl-tRNA synthetase family.

The protein resides in the cytoplasm. The protein localises to the cytosol. It catalyses the reaction tRNA(Arg) + L-arginine + ATP = L-arginyl-tRNA(Arg) + AMP + diphosphate. Forms part of a macromolecular complex that catalyzes the attachment of specific amino acids to cognate tRNAs during protein synthesis. This Dictyostelium discoideum (Social amoeba) protein is Probable arginine--tRNA ligase, cytoplasmic (argS1).